We begin with the raw amino-acid sequence, 105 residues long: MARALLKFIRVSPIKSRLIAREIQGMNAELALASLEFTPNKAAKIIAKVVASAVANSGNEAADCIVTSCRVDNGPVLKRFRPRARGMASGIRKPTAHILVEVEGK.

The protein belongs to the universal ribosomal protein uL22 family. In terms of assembly, part of the 50S ribosomal subunit.

In terms of biological role, this protein binds specifically to 23S rRNA; its binding is stimulated by other ribosomal proteins, e.g. L4, L17, and L20. It is important during the early stages of 50S assembly. It makes multiple contacts with different domains of the 23S rRNA in the assembled 50S subunit and ribosome. The globular domain of the protein is located near the polypeptide exit tunnel on the outside of the subunit, while an extended beta-hairpin is found that lines the wall of the exit tunnel in the center of the 70S ribosome. In Sulfurimonas denitrificans (strain ATCC 33889 / DSM 1251) (Thiomicrospira denitrificans (strain ATCC 33889 / DSM 1251)), this protein is Large ribosomal subunit protein uL22.